The primary structure comprises 507 residues: MVSATSASPADGRRVALLTLGCARNEVDSEELAARLHADGWQVTTDGEGAEVVVVNTCGFVEKAKQDSIQTLLAAAETGAKVVAAGCMAERYGRELADSLPEAQAVLSFDDYPDISDRLGAVLAGTAIDAHTPRDRRELLPLTPVRRREAAVSLPGHGTRAAAAGPGGRSAPVEVDEHTPAHLRPVLRRRLDTGPVASLKLASGCDRRCAFCAIPAFRGAFVSRPPEELLAEAEWLARTGVRELVLVSENSSSYGKDLGDPRALEKLLPQLAAVDGIVRVRASYLQPAETRPGLVEAIATTPGVAAYFDLSFQHSSEPVLRRMRRFGSTERFLDLLASVRALAPEAGARSNFIVGFPGETRADVAELVRFLNEARLDAIGVFDYSDEDGTEAAGLSGKVSATTVKRRYDRLGALADELCAQRAEQRLGSTVQVLVDSVDDGVVEGRAAHQAPEVDGSTTLVAPSGGGVDLAALRPGDLVRCTVTATEGVDLVAVPDGMISAAPGVAR.

Residues 13 to 124 (RRVALLTLGC…ISDRLGAVLA (112 aa)) form the MTTase N-terminal domain. [4Fe-4S] cluster is bound by residues cysteine 22, cysteine 58, and cysteine 87. The disordered stretch occupies residues 150 to 175 (AAVSLPGHGTRAAAAGPGGRSAPVEV). Low complexity predominate over residues 155 to 172 (PGHGTRAAAAGPGGRSAP). One can recognise a Radical SAM core domain in the interval 191-422 (LDTGPVASLK…ALADELCAQR (232 aa)). The [4Fe-4S] cluster site is built by cysteine 205, cysteine 209, and cysteine 212. Positions 424–497 (EQRLGSTVQV…GVDLVAVPDG (74 aa)) constitute a TRAM domain.

Belongs to the methylthiotransferase family. RimO subfamily. It depends on [4Fe-4S] cluster as a cofactor.

The protein localises to the cytoplasm. The catalysed reaction is L-aspartate(89)-[ribosomal protein uS12]-hydrogen + (sulfur carrier)-SH + AH2 + 2 S-adenosyl-L-methionine = 3-methylsulfanyl-L-aspartate(89)-[ribosomal protein uS12]-hydrogen + (sulfur carrier)-H + 5'-deoxyadenosine + L-methionine + A + S-adenosyl-L-homocysteine + 2 H(+). Functionally, catalyzes the methylthiolation of an aspartic acid residue of ribosomal protein uS12. This is Ribosomal protein uS12 methylthiotransferase RimO from Salinispora arenicola (strain CNS-205).